A 259-amino-acid polypeptide reads, in one-letter code: 1-(5-phosphoribosyl)-5-[(5-phosphoribosylamino)methylideneamino] imidazole-4-carboxamide isomerase (259 aa).

Aspartate 8 (proton acceptor) is an active-site residue. Aspartate 129 functions as the Proton donor in the catalytic mechanism.

This sequence belongs to the HisA/HisF family.

It is found in the cytoplasm. The enzyme catalyses 1-(5-phospho-beta-D-ribosyl)-5-[(5-phospho-beta-D-ribosylamino)methylideneamino]imidazole-4-carboxamide = 5-[(5-phospho-1-deoxy-D-ribulos-1-ylimino)methylamino]-1-(5-phospho-beta-D-ribosyl)imidazole-4-carboxamide. Its pathway is amino-acid biosynthesis; L-histidine biosynthesis; L-histidine from 5-phospho-alpha-D-ribose 1-diphosphate: step 4/9. This is 1-(5-phosphoribosyl)-5-[(5-phosphoribosylamino)methylideneamino] imidazole-4-carboxamide isomerase from Pelotomaculum thermopropionicum (strain DSM 13744 / JCM 10971 / SI).